The primary structure comprises 293 residues: Membrane protein RL13 (293 aa).

The signal sequence occupies residues methionine 1–cysteine 19. The chain crosses the membrane as a helical span at residues isoleucine 245–leucine 265.

The protein localises to the virion membrane. In terms of biological role, may play a role in modifying tropism or in modulating cell signaling during virus entry. Since RL13 expression severely impairs HCMV replication in epithelial cell cultures, it may act as a regulator promoting persistence by suppressing the switch to fully lytic infection. This Human cytomegalovirus (strain Merlin) (HHV-5) protein is Membrane protein RL13 (RL13).